We begin with the raw amino-acid sequence, 336 residues long: Protein DIA1 (336 aa).

The protein resides in the cytoplasm. Involved in regulation of invasive growth. This Saccharomyces cerevisiae (strain ATCC 204508 / S288c) (Baker's yeast) protein is Protein DIA1 (DIA1).